Here is a 140-residue protein sequence, read N- to C-terminus: Large ribosomal subunit protein uL16 (140 aa).

It belongs to the universal ribosomal protein uL16 family. In terms of assembly, part of the 50S ribosomal subunit.

In terms of biological role, binds 23S rRNA and is also seen to make contacts with the A and possibly P site tRNAs. In Phytoplasma australiense, this protein is Large ribosomal subunit protein uL16.